A 236-amino-acid polypeptide reads, in one-letter code: 2-C-methyl-D-erythritol 4-phosphate cytidylyltransferase (236 aa).

This sequence belongs to the IspD/TarI cytidylyltransferase family. IspD subfamily.

The catalysed reaction is 2-C-methyl-D-erythritol 4-phosphate + CTP + H(+) = 4-CDP-2-C-methyl-D-erythritol + diphosphate. It functions in the pathway isoprenoid biosynthesis; isopentenyl diphosphate biosynthesis via DXP pathway; isopentenyl diphosphate from 1-deoxy-D-xylulose 5-phosphate: step 2/6. Its function is as follows. Catalyzes the formation of 4-diphosphocytidyl-2-C-methyl-D-erythritol from CTP and 2-C-methyl-D-erythritol 4-phosphate (MEP). In Symbiobacterium thermophilum (strain DSM 24528 / JCM 14929 / IAM 14863 / T), this protein is 2-C-methyl-D-erythritol 4-phosphate cytidylyltransferase.